A 283-amino-acid chain; its full sequence is MKQYLQLCQRIVDEGQWVENKRTGTRCLTVINADLEYDVANNQFPMITTRKSYYKAAIAELLGYLRGYDSAAQFREIGCKTWDANANENSAWLNNPHRKGEDDMGRVYGVQGRAWQRPDGSTLDQLAKVINNLKNGIDDRGEIISFYNPGEFELGCLRPCMHTHTFSLLGDTLYLTSIQRSCDVPLGLNFNQIQCFVLLALVAQITGHKAGKAYHKITNAHIYENQLELMRDVQLKREPFASPQLKINPNIKSLNDIETWVTRDDFEVTGYECHEAIQYPFSV.

Arg22 lines the dUMP pocket. Cys160 serves as the catalytic Nucleophile. Residues 180–183 (RSCD), Asn191, and 221–223 (HIY) contribute to the dUMP site. Residue Asp183 participates in (6R)-5,10-methylene-5,6,7,8-tetrahydrofolate binding. Position 282 (Ser282) interacts with (6R)-5,10-methylene-5,6,7,8-tetrahydrofolate.

Belongs to the thymidylate synthase family. Bacterial-type ThyA subfamily. Homodimer.

The protein localises to the cytoplasm. The catalysed reaction is dUMP + (6R)-5,10-methylene-5,6,7,8-tetrahydrofolate = 7,8-dihydrofolate + dTMP. Its pathway is pyrimidine metabolism; dTTP biosynthesis. Its function is as follows. Catalyzes the reductive methylation of 2'-deoxyuridine-5'-monophosphate (dUMP) to 2'-deoxythymidine-5'-monophosphate (dTMP) while utilizing 5,10-methylenetetrahydrofolate (mTHF) as the methyl donor and reductant in the reaction, yielding dihydrofolate (DHF) as a by-product. This enzymatic reaction provides an intracellular de novo source of dTMP, an essential precursor for DNA biosynthesis. In Pseudoalteromonas translucida (strain TAC 125), this protein is Thymidylate synthase.